Here is a 74-residue protein sequence, read N- to C-terminus: Protein A30 homolog (74 aa).

The protein belongs to the chordopoxvirinae A30 family. In terms of assembly, interacts with protein G7; the interaction stabilizes both proteins. In terms of processing, phosphorylated by viral F10 kinase.

In terms of biological role, required for the association between the dense viroplasm and the viral membranes to form the mature virion (MV). The sequence is that of Protein A30 homolog from Fowlpox virus (strain NVSL) (FPV).